A 215-amino-acid polypeptide reads, in one-letter code: Large ribosomal subunit protein uL3 (215 aa).

The interval 136-155 (GVSISHRSHGSTGQRQDPGK) is disordered. Position 151 is an N5-methylglutamine (Gln151).

It belongs to the universal ribosomal protein uL3 family. Part of the 50S ribosomal subunit. Forms a cluster with proteins L14 and L19. Post-translationally, methylated by PrmB.

Functionally, one of the primary rRNA binding proteins, it binds directly near the 3'-end of the 23S rRNA, where it nucleates assembly of the 50S subunit. The sequence is that of Large ribosomal subunit protein uL3 from Rickettsia felis (strain ATCC VR-1525 / URRWXCal2) (Rickettsia azadi).